The sequence spans 217 residues: Probable nicotinate-nucleotide adenylyltransferase (217 aa).

It belongs to the NadD family.

The enzyme catalyses nicotinate beta-D-ribonucleotide + ATP + H(+) = deamido-NAD(+) + diphosphate. The protein operates within cofactor biosynthesis; NAD(+) biosynthesis; deamido-NAD(+) from nicotinate D-ribonucleotide: step 1/1. Its function is as follows. Catalyzes the reversible adenylation of nicotinate mononucleotide (NaMN) to nicotinic acid adenine dinucleotide (NaAD). The chain is Probable nicotinate-nucleotide adenylyltransferase from Baumannia cicadellinicola subsp. Homalodisca coagulata.